Here is a 347-residue protein sequence, read N- to C-terminus: Dolichyl-diphosphooligosaccharide--protein glycosyltransferase subunit TUSC3 (347 aa).

Residues 1–41 (MGARGAPSRRRQAGRRPRYLPTGSFPFLLLLLLLCIQLGGG) form the signal peptide. The Lumenal segment spans residues 42 to 196 (QKKKENLLAE…DVHIRVFRPP (155 aa)). One can recognise a Thioredoxin domain in the interval 59-187 (WSSRRSVFRM…LAKWIADRTD (129 aa)). Asparagine 83 is a glycosylation site (N-linked (GlcNAc...) asparagine). Residues cysteine 99 and cysteine 102 are joined by a disulfide bond. A helical membrane pass occupies residues 197-217 (NYSGTIALALLVSLVGGLLYL). The Cytoplasmic segment spans residues 218-221 (RRNN). Residues 222–242 (LEFIYNKTGWAMVSLCIVFAM) form a helical membrane-spanning segment. Over 243–276 (TSGQMWNHIRGPPYAHKNPHNGQVSYIHGSSQVQ) the chain is Lumenal. The chain crosses the membrane as a helical span at residues 277–297 (FVAESHIILVLNAAITMGMDL). Residues 298 to 312 (LNEAATSKGDVGKRR) are Cytoplasmic-facing. The chain crosses the membrane as a helical span at residues 313-333 (IICLVGLGLVVFFFSFLLSIF). The Lumenal portion of the chain corresponds to 334–347 (RSKYHGYPYSFLIK).

The protein belongs to the OST3/OST6 family. As to quaternary structure, accessory component of the STT3B-containing form of the oligosaccharyltransferase (OST) complex. OST exists in two different complex forms which contain common core subunits RPN1, RPN2, OST48, OST4, DAD1 and TMEM258, either STT3A or STT3B as catalytic subunits, and form-specific accessory subunits. OST can form stable complexes with the Sec61 complex or with both the Sec61 and TRAP complexes. The association of TUSC3 or MAGT1 with the STT3B-containing complex seems to be mutually exclusvice.

It localises to the endoplasmic reticulum membrane. It participates in protein modification; protein glycosylation. Functionally, acts as accessory component of the N-oligosaccharyl transferase (OST) complex which catalyzes the transfer of a high mannose oligosaccharide from a lipid-linked oligosaccharide donor to an asparagine residue within an Asn-X-Ser/Thr consensus motif in nascent polypeptide chains. Involved in N-glycosylation of STT3B-dependent substrates. Specifically required for the glycosylation of a subset of acceptor sites that are near cysteine residues; in this function seems to act redundantly with MAGT1. In its oxidized form proposed to form transient mixed disulfides with a glycoprotein substrate to facilitate access of STT3B to the unmodified acceptor site. Also has oxidoreductase-independent functions in the STT3B-containing OST complex possibly involving substrate recognition. Could indirectly play a role in Mg(2+) transport. This Bos taurus (Bovine) protein is Dolichyl-diphosphooligosaccharide--protein glycosyltransferase subunit TUSC3 (TUSC3).